A 171-amino-acid polypeptide reads, in one-letter code: Putative charged multivesicular body protein 4B-like protein CHMP4BP1 (171 aa).

The span at 1–17 (MLSKKQEFLEKKIEQRH) shows a compositional bias: basic and acidic residues. Disordered stretches follow at residues 1–24 (MLSKKQEFLEKKIEQRHGTKNKPA) and 132–171 (EQEEPDKNLLEVSGPETVPLPNVPSIALPSKPAKKRKTTT).

This sequence belongs to the SNF7 family.

This Homo sapiens (Human) protein is Putative charged multivesicular body protein 4B-like protein CHMP4BP1 (CHMP4BP1).